A 1201-amino-acid chain; its full sequence is Transcription-repair-coupling factor (1201 aa).

The segment at 1-27 (MRLLITLGPSGSTHGHSLHTDAGRRRG) is disordered. The 162-residue stretch at 670–831 (DMQKPEPMDR…MSGVRDMSII (162 aa)) folds into the Helicase ATP-binding domain. Residue 683 to 690 (GDVGYGKT) participates in ATP binding. The DEEQ box motif lies at 784–787 (DEEQ). One can recognise a Helicase C-terminal domain in the interval 852–1006 (VVKEAIEREV…GFSIASHDLE (155 aa)).

This sequence in the N-terminal section; belongs to the UvrB family. It in the C-terminal section; belongs to the helicase family. RecG subfamily.

It is found in the cytoplasm. Functionally, couples transcription and DNA repair by recognizing RNA polymerase (RNAP) stalled at DNA lesions. Mediates ATP-dependent release of RNAP and its truncated transcript from the DNA, and recruitment of nucleotide excision repair machinery to the damaged site. The chain is Transcription-repair-coupling factor from Myxococcus xanthus.